The primary structure comprises 372 residues: Alanine dehydrogenase (372 aa).

The substrate site is built by Arg-15 and Lys-75. Catalysis depends on His-96, which acts as the Proton donor/acceptor. Residues Ser-134, 178–179 (TA), Asp-198, Ser-220, 239–240 (VL), 266–269 (IAID), Arg-279, and 298–301 (VANM) each bind NAD(+). Asp-269 serves as the catalytic Proton donor/acceptor.

This sequence belongs to the AlaDH/PNT family. In terms of assembly, homohexamer.

It is found in the cytoplasm. The catalysed reaction is L-alanine + NAD(+) + H2O = pyruvate + NH4(+) + NADH + H(+). It participates in amino-acid degradation; L-alanine degradation via dehydrogenase pathway; NH(3) and pyruvate from L-alanine: step 1/1. Functionally, catalyzes the reversible reductive amination of pyruvate to L-alanine. A key factor in the assimilation of L-alanine as an energy source via the tricarboxylic acid cycle during sporulation. The polypeptide is Alanine dehydrogenase (ald) (Geobacillus stearothermophilus (Bacillus stearothermophilus)).